The sequence spans 195 residues: Putative deoxynucleoside kinase (195 aa).

The protein is Putative deoxynucleoside kinase of Frog virus 3 (isolate Goorha) (FV-3).